We begin with the raw amino-acid sequence, 265 residues long: Anamorsin homolog 1 (265 aa).

The tract at residues 1 to 143 (MAATAAAALA…KASWSMGSSF (143 aa)) is N-terminal SAM-like domain. The segment at 144–175 (PLKKATKGLPKIQIDDDSELIDEDSLLTEDDL) is linker. [2Fe-2S] cluster is bound by residues Cys186, Cys195, Cys198, and Cys200. The segment at 186–200 (CEVGATRKACKNCTC) is fe-S binding site A. Residues Cys226, Cys229, Cys237, and Cys240 each coordinate [4Fe-4S] cluster. 2 short sequence motifs (cx2C motif) span residues 226-229 (CGNC) and 237-240 (CGTC). A fe-S binding site B region spans residues 226–240 (CGNCGLGDAFRCGTC).

The protein belongs to the anamorsin family. In terms of assembly, monomer. Requires [2Fe-2S] cluster as cofactor. It depends on [4Fe-4S] cluster as a cofactor.

It localises to the cytoplasm. The protein resides in the mitochondrion intermembrane space. Component of the cytosolic iron-sulfur (Fe-S) protein assembly (CIA) machinery. Required for the maturation of extramitochondrial Fe-S proteins. Part of an electron transfer chain functioning in an early step of cytosolic Fe-S biogenesis, facilitating the de novo assembly of a [4Fe-4S] cluster on the cytosolic Fe-S scaffold complex. Electrons are transferred from NADPH via a FAD- and FMN-containing diflavin oxidoreductase. Together with the diflavin oxidoreductase, also required for the assembly of the diferric tyrosyl radical cofactor of ribonucleotide reductase (RNR), probably by providing electrons for reduction during radical cofactor maturation in the catalytic small subunit. This Oryza sativa subsp. indica (Rice) protein is Anamorsin homolog 1.